The sequence spans 227 residues: MIMSFFDQFLSPSFLGIPLIALAISIPWLMFPTPTNRWLNNRLLTLQAWFINRFIYQLMQPMNLGGHKWAILFTALMLFLITINLLGLLPYTFTPTTQLSLNMAFALPLWLTTVLIGMFNQPTIALGHLLPEGTPTPLVPVLIIIETISLFIRPLALGVRLTANLTAGHLLMQLIATAAFVLLTMMPTVALLTSLVLFLLTILEVAVAMIQAYVFVLLLSLYLQENV.

The next 6 membrane-spanning stretches (helical) occupy residues 14–34 (FLGI…FPTP), 69–89 (WAIL…LGLL), 99–119 (LSLN…IGMF), 139–159 (VPVL…ALGV), 165–185 (LTAG…LLTM), and 190–210 (ALLT…VAMI).

Belongs to the ATPase A chain family. In terms of assembly, component of the ATP synthase complex composed at least of ATP5F1A/subunit alpha, ATP5F1B/subunit beta, ATP5MC1/subunit c (homooctomer), MT-ATP6/subunit a, MT-ATP8/subunit 8, ATP5ME/subunit e, ATP5MF/subunit f, ATP5MG/subunit g, ATP5MK/subunit k, ATP5MJ/subunit j, ATP5F1C/subunit gamma, ATP5F1D/subunit delta, ATP5F1E/subunit epsilon, ATP5PF/subunit F6, ATP5PB/subunit b, ATP5PD/subunit d, ATP5PO/subunit OSCP. ATP synthase complex consists of a soluble F(1) head domain (subunits alpha(3) and beta(3)) - the catalytic core - and a membrane F(0) domain - the membrane proton channel (subunits c, a, 8, e, f, g, k and j). These two domains are linked by a central stalk (subunits gamma, delta, and epsilon) rotating inside the F1 region and a stationary peripheral stalk (subunits F6, b, d, and OSCP). Interacts with DNAJC30; interaction is direct.

It localises to the mitochondrion inner membrane. The catalysed reaction is H(+)(in) = H(+)(out). Functionally, subunit a, of the mitochondrial membrane ATP synthase complex (F(1)F(0) ATP synthase or Complex V) that produces ATP from ADP in the presence of a proton gradient across the membrane which is generated by electron transport complexes of the respiratory chain. ATP synthase complex consist of a soluble F(1) head domain - the catalytic core - and a membrane F(1) domain - the membrane proton channel. These two domains are linked by a central stalk rotating inside the F(1) region and a stationary peripheral stalk. During catalysis, ATP synthesis in the catalytic domain of F(1) is coupled via a rotary mechanism of the central stalk subunits to proton translocation. With the subunit c (ATP5MC1), forms the proton-conducting channel in the F(0) domain, that contains two crucial half-channels (inlet and outlet) that facilitate proton movement from the mitochondrial intermembrane space (IMS) into the matrix. Protons are taken up via the inlet half-channel and released through the outlet half-channel, following a Grotthuss mechanism. This is ATP synthase F(0) complex subunit a from Scyliorhinus canicula (Small-spotted catshark).